Here is a 188-residue protein sequence, read N- to C-terminus: Probable nicotinate-nucleotide adenylyltransferase (188 aa).

Belongs to the NadD family.

The catalysed reaction is nicotinate beta-D-ribonucleotide + ATP + H(+) = deamido-NAD(+) + diphosphate. It functions in the pathway cofactor biosynthesis; NAD(+) biosynthesis; deamido-NAD(+) from nicotinate D-ribonucleotide: step 1/1. Functionally, catalyzes the reversible adenylation of nicotinate mononucleotide (NaMN) to nicotinic acid adenine dinucleotide (NaAD). The protein is Probable nicotinate-nucleotide adenylyltransferase of Listeria monocytogenes serotype 4a (strain HCC23).